We begin with the raw amino-acid sequence, 712 residues long: Probable serine/threonine-protein kinase fhkE (712 aa).

The FHA domain occupies 46–100 (ITFGRLKDSTVHYNDKSISGSHCKITRESNDDDGVVIAFIYDNSTNGTFIDNIKV). One can recognise a Protein kinase domain in the interval 145 to 411 (YFIGEMLGQG…CNNIIQHPWF (267 aa)). ATP-binding positions include 151–159 (LGQGNFATV) and Lys-174. Asp-270 acts as the Proton acceptor in catalysis. Residues 414–442 (NVKLSTLLEEDERLRKKAEAEVEANNNNT) adopt a coiled-coil conformation. Residues 431–695 (AEAEVEANNN…KCQYDPNCYR (265 aa)) are disordered. Low complexity-rich tracts occupy residues 436–446 (EANNNNTNKSN), 459–481 (GNCS…IKSN), 514–571 (NNDN…SNDT), 595–605 (NLQNHLNNNKI), and 616–639 (NNNN…NNNN). Polar residues predominate over residues 669-678 (PQNSSNNNSG).

Belongs to the protein kinase superfamily. CAMK Ser/Thr protein kinase family. CHK2 subfamily.

It catalyses the reaction L-seryl-[protein] + ATP = O-phospho-L-seryl-[protein] + ADP + H(+). The enzyme catalyses L-threonyl-[protein] + ATP = O-phospho-L-threonyl-[protein] + ADP + H(+). The polypeptide is Probable serine/threonine-protein kinase fhkE (fhkE) (Dictyostelium discoideum (Social amoeba)).